We begin with the raw amino-acid sequence, 364 residues long: Large ribosomal subunit protein bL27m (364 aa).

Residues 1-19 (MFSSSWQQVPKFVVQQVRT) constitute a mitochondrion transit peptide.

Belongs to the bacterial ribosomal protein bL27 family.

Its subcellular location is the mitochondrion. Its function is as follows. Component of the large subunit of mitochondrial ribosome. This chain is Large ribosomal subunit protein bL27m (MRPL2), found in Kluyveromyces lactis (strain ATCC 8585 / CBS 2359 / DSM 70799 / NBRC 1267 / NRRL Y-1140 / WM37) (Yeast).